A 382-amino-acid polypeptide reads, in one-letter code: Putative UDP-sugar transporter DDB_G0278631 (382 aa).

The next 7 helical transmembrane spans lie at 117–137 (FSASNFLLFNQMVVTIVILHI), 183–203 (MYSALKRLVAVVILVMEYFIL), 211–231 (IIASVVVMVIGAVVAGITDLS), 234–254 (SLGYSLVLLSCIFQASYLIYV), 264–284 (YDMLYYNSVLSLPITIFLMIV), 302–322 (FQAYFILSIFLGFFLNFCIFF), and 354–374 (IIIHPINILGLIINIIGSIWY).

The protein belongs to the TPT transporter family. SLC35D subfamily.

It localises to the membrane. May be nvolved in the import of UDP-sugars. This chain is Putative UDP-sugar transporter DDB_G0278631, found in Dictyostelium discoideum (Social amoeba).